Consider the following 95-residue polypeptide: Aspartyl/glutamyl-tRNA(Asn/Gln) amidotransferase subunit C (95 aa).

It belongs to the GatC family. In terms of assembly, heterotrimer of A, B and C subunits.

The catalysed reaction is L-glutamyl-tRNA(Gln) + L-glutamine + ATP + H2O = L-glutaminyl-tRNA(Gln) + L-glutamate + ADP + phosphate + H(+). It catalyses the reaction L-aspartyl-tRNA(Asn) + L-glutamine + ATP + H2O = L-asparaginyl-tRNA(Asn) + L-glutamate + ADP + phosphate + 2 H(+). Functionally, allows the formation of correctly charged Asn-tRNA(Asn) or Gln-tRNA(Gln) through the transamidation of misacylated Asp-tRNA(Asn) or Glu-tRNA(Gln) in organisms which lack either or both of asparaginyl-tRNA or glutaminyl-tRNA synthetases. The reaction takes place in the presence of glutamine and ATP through an activated phospho-Asp-tRNA(Asn) or phospho-Glu-tRNA(Gln). The protein is Aspartyl/glutamyl-tRNA(Asn/Gln) amidotransferase subunit C of Brucella melitensis biotype 2 (strain ATCC 23457).